The following is a 427-amino-acid chain: Glucose-1-phosphate adenylyltransferase (427 aa).

The AMP site is built by arginine 40, histidine 46, and arginine 52. An alpha-D-glucose 1-phosphate-binding site is contributed by tyrosine 114. An AMP-binding site is contributed by arginine 130. Alpha-D-glucose 1-phosphate contacts are provided by residues glycine 179, 194–195 (EK), and serine 212. Arginine 386 serves as a coordination point for AMP.

This sequence belongs to the bacterial/plant glucose-1-phosphate adenylyltransferase family. As to quaternary structure, homotetramer.

The catalysed reaction is alpha-D-glucose 1-phosphate + ATP + H(+) = ADP-alpha-D-glucose + diphosphate. Its pathway is glycan biosynthesis; glycogen biosynthesis. Allosterically activated by fructose-1,6-bisphosphate (F16BP) and inhibited by AMP. Its function is as follows. Involved in the biosynthesis of ADP-glucose, a building block required for the elongation reactions to produce glycogen. Catalyzes the reaction between ATP and alpha-D-glucose 1-phosphate (G1P) to produce pyrophosphate and ADP-Glc. This is Glucose-1-phosphate adenylyltransferase from Cronobacter sakazakii (strain ATCC BAA-894) (Enterobacter sakazakii).